Reading from the N-terminus, the 763-residue chain is Glycerophosphodiester phosphodiesterase GDPDL1 (763 aa).

Positions 1–35 are cleaved as a signal peptide; that stretch reads MNSRPSNPTKLVIRSSTLLFCGVVLIHLFAAQIDA. The Extracellular segment spans residues 36–744; the sequence is QRSTSRWQTL…STIAQAPSGQ (709 aa). Residues 50–350 form the GP-PDE 1 domain; that stretch reads PLVIARGGFS…DFPITASAAV (301 aa). N-linked (GlcNAc...) asparagine glycosylation is found at Asn105, Asn192, Asn248, Asn257, Asn315, Asn359, Asn430, Asn534, Asn547, and Asn654. The 303-residue stretch at 366 to 668 folds into the GP-PDE 2 domain; it reads FLVISKDGAS…EFPFTAARYK (303 aa). Residues 745-762 form a helical membrane-spanning segment; it reads TRLKLSLLLSVFFLSLLL. Leu763 is a topological domain (cytoplasmic).

This sequence belongs to the glycerophosphoryl diester phosphodiesterase family. The cofactor is Ca(2+). Expressed in rosette and cauline leaves, stems, flowers and siliques.

The protein localises to the cell membrane. The catalysed reaction is a sn-glycero-3-phosphodiester + H2O = an alcohol + sn-glycerol 3-phosphate + H(+). Hydrolyzes glycerolphosphoglycerol, glycerophosphocholine and glycerophosphoethanolamine in vitro. This Arabidopsis thaliana (Mouse-ear cress) protein is Glycerophosphodiester phosphodiesterase GDPDL1.